A 422-amino-acid polypeptide reads, in one-letter code: Enolase (422 aa).

Glutamine 162 contributes to the (2R)-2-phosphoglycerate binding site. The active-site Proton donor is the glutamate 204. Residues aspartate 241, glutamate 285, and aspartate 312 each contribute to the Mg(2+) site. The (2R)-2-phosphoglycerate site is built by lysine 337, arginine 366, serine 367, and lysine 388. Lysine 337 acts as the Proton acceptor in catalysis.

Belongs to the enolase family. Requires Mg(2+) as cofactor.

It is found in the cytoplasm. The protein resides in the secreted. The protein localises to the cell surface. The catalysed reaction is (2R)-2-phosphoglycerate = phosphoenolpyruvate + H2O. It functions in the pathway carbohydrate degradation; glycolysis; pyruvate from D-glyceraldehyde 3-phosphate: step 4/5. Functionally, catalyzes the reversible conversion of 2-phosphoglycerate (2-PG) into phosphoenolpyruvate (PEP). It is essential for the degradation of carbohydrates via glycolysis. The chain is Enolase from Wolinella succinogenes (strain ATCC 29543 / DSM 1740 / CCUG 13145 / JCM 31913 / LMG 7466 / NCTC 11488 / FDC 602W) (Vibrio succinogenes).